Consider the following 1236-residue polypeptide: Complement factor H (1236 aa).

A signal peptide spans methionine 1 to alanine 18. Sushi domains follow at residues glutamate 19–lysine 82, lysine 83–valine 143, valine 144–glutamate 207, isoleucine 208–glutamate 264, isoleucine 265–tryptophan 322, cysteine 325–cysteine 383, arginine 385–arginine 442, lysine 444–lysine 505, cysteine 507–cysteine 562, arginine 565–valine 623, lysine 627–glutamate 685, arginine 688–alanine 745, arginine 750–glutamate 804, glutamine 809–glutamate 866, isoleucine 868–glycine 936, leucine 937–serine 994, threonine 995–aspartate 1053, valine 1054–aspartate 1111, glycine 1114–glutamate 1172, and alanine 1173–cysteine 1235. Disulfide bonds link cysteine 21/cysteine 66, cysteine 52/cysteine 80, cysteine 85/cysteine 129, cysteine 114/cysteine 141, cysteine 146/cysteine 192, cysteine 178/cysteine 205, cysteine 210/cysteine 251, cysteine 237/cysteine 262, cysteine 267/cysteine 309, cysteine 294/cysteine 320, cysteine 325/cysteine 372, cysteine 355/cysteine 383, cysteine 387/cysteine 429, cysteine 414/cysteine 440, cysteine 446/cysteine 492, cysteine 475/cysteine 503, cysteine 507/cysteine 551, cysteine 534/cysteine 562, cysteine 567/cysteine 609, cysteine 595/cysteine 621, cysteine 629/cysteine 672, cysteine 658/cysteine 683, cysteine 690/cysteine 732, cysteine 718/cysteine 743, cysteine 752/cysteine 791, cysteine 780/cysteine 802, cysteine 811/cysteine 853, cysteine 839/cysteine 864, cysteine 870/cysteine 923, cysteine 909/cysteine 934, cysteine 939/cysteine 981, cysteine 967/cysteine 992, cysteine 997/cysteine 1040, cysteine 1026/cysteine 1051, cysteine 1056/cysteine 1098, cysteine 1084/cysteine 1109, cysteine 1116/cysteine 1159, cysteine 1145/cysteine 1170, cysteine 1174/cysteine 1225, and cysteine 1208/cysteine 1235. A sulfotyrosine mark is found at tyrosine 168 and tyrosine 170. Sulfotyrosine occurs at positions 465 and 473. A sulfotyrosine mark is found at tyrosine 575, tyrosine 579, and tyrosine 585. N-linked (GlcNAc...) asparagine glycosylation occurs at asparagine 775. N-linked (GlcNAc...) asparagine glycosylation is present at asparagine 1100.

As to quaternary structure, homodimer. Also forms homooligomers. Interacts with complement protein C3b; this interaction inhibits complement activation. Interacts with complement protein C3d. Interacts with CR3/ITGAM; this interaction mediates adhesion of neutrophils to pathogens leading to pathogen clearance. Sulfated on tyrosine residues. In terms of tissue distribution, CFH is one of the most abundant complement components in blood where the liver is the major source of CFH protein in vivo. in addition, CFH is secreted by additional cell types including monocytes, fibroblasts, or endothelial cells.

The protein localises to the secreted. In terms of biological role, glycoprotein that plays an essential role in maintaining a well-balanced immune response by modulating complement activation. Acts as a soluble inhibitor of complement, where its binding to self markers such as glycan structures prevents complement activation and amplification on cell surfaces. Accelerates the decay of the complement alternative pathway (AP) C3 convertase C3bBb, thus preventing local formation of more C3b, the central player of the complement amplification loop. As a cofactor of the serine protease factor I, CFH also regulates proteolytic degradation of already-deposited C3b. In addition, mediates several cellular responses through interaction with specific receptors. For example, interacts with CR3/ITGAM receptor and thereby mediates the adhesion of human neutrophils to different pathogens. In turn, these pathogens are phagocytosed and destroyed. In Bos taurus (Bovine), this protein is Complement factor H (CFH).